The sequence spans 400 residues: Acetate kinase (400 aa).

Asn10 serves as a coordination point for Mg(2+). Lys17 is an ATP binding site. Substrate is bound at residue Arg91. Asp150 serves as the catalytic Proton donor/acceptor. Residues 210–214 (HLGSG), 285–287 (DCR), and 333–337 (GIGEN) contribute to the ATP site. Glu387 provides a ligand contact to Mg(2+).

The protein belongs to the acetokinase family. Homodimer. Requires Mg(2+) as cofactor. Mn(2+) serves as cofactor.

The protein resides in the cytoplasm. It carries out the reaction acetate + ATP = acetyl phosphate + ADP. The protein operates within metabolic intermediate biosynthesis; acetyl-CoA biosynthesis; acetyl-CoA from acetate: step 1/2. In terms of biological role, catalyzes the formation of acetyl phosphate from acetate and ATP. Can also catalyze the reverse reaction. This chain is Acetate kinase, found in Baumannia cicadellinicola subsp. Homalodisca coagulata.